We begin with the raw amino-acid sequence, 349 residues long: Hydroxymethylglutaryl-CoA synthase (349 aa).

Position 30 (Asp30) interacts with (3S)-3-hydroxy-3-methylglutaryl-CoA. The Proton donor/acceptor role is filled by Glu82. Residue Cys114 coordinates (3S)-3-hydroxy-3-methylglutaryl-CoA. The Acyl-thioester intermediate role is filled by Cys114. Arg203 contributes to the CoA binding site. Positions 205 and 238 each coordinate (3S)-3-hydroxy-3-methylglutaryl-CoA. His238 serves as the catalytic Proton donor/acceptor. Lys243 lines the CoA pocket. Residues Lys247, Asn270, and Ser300 each contribute to the (3S)-3-hydroxy-3-methylglutaryl-CoA site.

This sequence belongs to the thiolase-like superfamily. Archaeal HMG-CoA synthase family. Interacts with acetoacetyl-CoA thiolase that catalyzes the precedent step in the pathway and with a DUF35 protein. The acetoacetyl-CoA thiolase/HMG-CoA synthase complex channels the intermediate via a fused CoA-binding site, which allows for efficient coupling of the endergonic thiolase reaction with the exergonic HMGCS reaction.

The catalysed reaction is acetoacetyl-CoA + acetyl-CoA + H2O = (3S)-3-hydroxy-3-methylglutaryl-CoA + CoA + H(+). The protein operates within metabolic intermediate biosynthesis; (R)-mevalonate biosynthesis; (R)-mevalonate from acetyl-CoA: step 2/3. Its function is as follows. Catalyzes the condensation of acetyl-CoA with acetoacetyl-CoA to form 3-hydroxy-3-methylglutaryl-CoA (HMG-CoA). Functions in the mevalonate (MVA) pathway leading to isopentenyl diphosphate (IPP), a key precursor for the biosynthesis of isoprenoid compounds that are building blocks of archaeal membrane lipids. This Methanothermococcus thermolithotrophicus (Methanococcus thermolithotrophicus) protein is Hydroxymethylglutaryl-CoA synthase.